Reading from the N-terminus, the 973-residue chain is MSARPFSTPFDRERRVRSTLKKVFGFDSFKTPLQESAIMAVVKGDKDVFVCMPTGAGKSLCYQLPAVLAKGITIVVSPLIALIQDQVDHLLALKVQVSSLNSKLSVQERKELLSDLERDKPRTKLLYITPEMAASASFQPTLNSLLSRNLLSYLVVDEAHCVSQWGHDFRPDYLRLGALRSRLAHAPCVALTATATPQVQEDVFAALHLKQPVASFKTPCFRANLFYDVQFKELIPDVYGNLRDFCLKALGQKADNGSSSGCGIVYCRTREACEQLAIELSSRGVNAKAYHAGLKASERTQVQNEWMEEKVPVIVATISFGMGVDKANVRFVAHWNIAKSMAGYYQESGRAGRDGKPSWCRLYYSRNDRDQVSFLIRKELAKLQEKRGNKPSDKATLLAFDALVTFCEEVGCRHAAIAKYFGDAPPACAKGCDCCQSPAAIRKKLDALEHSSSWGKTCIGPSQGDGFDPELYEGGRRGYGGFSRYDEGSGGSGDEGRDEAHKREWNLFYQRQMSLRKGKEAKPEEFTPPGEDCPLRDASSRKIPKLTVKAREHCLRLLEEALNSNHQAAGSTHGADLQAKAVELEHETFRSAKMVNLYKASVLKKVAEIHKASKDGQLYDMESSTKSCGAIAELLEPSDYDIPPTSHLYSLKPKRVGAGFSKGPCPFQTATELLGKSQTEKLAPEAALESEQEPSGWVCDPQDGDRSKPCLGYQEEAPGSRTNCGDPSPEKRTKGSSQGSAKARASKRQQLLATAARKDSQSITRFLRQRTECPPPAASVPSSEDASPCGDVPGKCTEEVGAQGHLVAVFQTECPRERLSTCSLEDQSLPKGQPSPLKETQAEKRPRPQQESQEKRAQKRLRPSTNSSALASDPSTENRVAREPCQLSAPGISLKEAADIVVRYLTPFYKEGRFISKDLFKGFARHLSHLLAQKLSPGRSVKEEAQSLIKQFFHNRARCESEADWHGLCGPQR.

One can recognise a Helicase ATP-binding domain in the interval 39–213; it reads MAVVKGDKDV…FAALHLKQPV (175 aa). 52–59 is an ATP binding site; that stretch reads MPTGAGKS. The DEAH box signature appears at 157-160; the sequence is DEAH. Residues 241–398 form the Helicase C-terminal domain; it reads NLRDFCLKAL…NKPSDKATLL (158 aa). 4 residues coordinate Zn(2+): Cys412, Cys428, Cys432, and Cys435. A phosphoserine mark is found at Ser489 and Ser492. The interval 491–621 is interaction with POLR2A; it reads GSGDEGRDEA…ASKDGQLYDM (131 aa). 3 disordered regions span residues 518–538, 679–795, and 822–884; these read GKEAKPEEFTPPGEDCPLRDA, TEKL…VPGK, and CSLE…AREP. Position 527 is a phosphothreonine (Thr527). The segment at 653 to 726 is interaction with RAD51; sequence PKRVGAGFSK…APGSRTNCGD (74 aa). Phosphoserine; by CDK1 is present on Ser728. Over residues 840-856 the composition is skewed to basic and acidic residues; the sequence is TQAEKRPRPQQESQEKR. Over residues 863–878 the composition is skewed to polar residues; the sequence is PSTNSSALASDPSTEN.

It belongs to the helicase family. RecQ subfamily. Monomer. Interacts with TOP2A, TOP3A and TOP3B. Interacts with RNA polymerase II subunit POLR2A. Identified in a complex with the RNA polymerase II core bound to DNA. Interacts with RAD51. Interacts with WRN; this interaction stimulates WRN helicase activity on DNA fork duplexes. Interacts with MUS1; this interaction promotes MUS81-dependent mitotic DNA synthesis. Zn(2+) is required as a cofactor. In terms of processing, phosphorylated by CDK1 at Ser-728; this phosphorylation is required for RECQL5-mediated disruption of RAD51 filaments on stalled replication forks.

The protein localises to the nucleus. Its subcellular location is the nucleoplasm. The catalysed reaction is Couples ATP hydrolysis with the unwinding of duplex DNA by translocating in the 3'-5' direction.. The enzyme catalyses ATP + H2O = ADP + phosphate + H(+). DNA helicase that plays an important role in DNA replication, transcription and repair. Binds to the RNA polymerase II subunit POLR2A during transcription elongation and suppresses transcription-associated genomic instability. Also associates with POLR1A and enforces the stability of ribosomal DNA arrays. Plays an important role in mitotic chromosome separation after cross-over events and cell cycle progress. Mechanistically, removes RAD51 filaments protecting stalled replication forks at common fragile sites and stimulates MUS81-EME1 endonuclease leading to mitotic DNA synthesis. Required for efficient DNA repair, including repair of inter-strand cross-links. Stimulates DNA decatenation mediated by TOP2A. Prevents sister chromatid exchange and homologous recombination. The chain is ATP-dependent DNA helicase Q5 (Recql5) from Rattus norvegicus (Rat).